A 735-amino-acid chain; its full sequence is Cyclic nucleotide-gated channel cone photoreceptor subunit alpha (735 aa).

The Cytoplasmic portion of the chain corresponds to 1-214 (MAKINTQHSY…PSSNMYYNWL (214 aa)). Residues 142–191 (VNFSNNTNEDKKEEKKEVKEEKKEEKKEEKKEEKKDDKKDDKKDDKKDDK) form a disordered region. Residues 149–191 (NEDKKEEKKEVKEEKKEEKKEEKKEEKKDDKKDDKKDDKKDDK) are compositionally biased toward basic and acidic residues. The helical transmembrane segment at 215–236 (TIIAAPVFYNWCMLICRACFDE) threads the bilayer. The Extracellular segment spans residues 237–246 (LQIDHIKLWL). Residues 247 to 267 (FLDYCSDIIYVFDMFVRFRTG) form a helical membrane-spanning segment. At 268–292 (FLEQGLLVKDEKKLRDHYTQTVQFK) the chain is on the cytoplasmic side. Residues 293–311 (LDVLSLLPTDLAYLKLGLN) form a helical membrane-spanning segment. Residues 312 to 316 (YPELR) are Extracellular-facing. A helical transmembrane segment spans residues 317–335 (FNRLLRIARLFEFFDRTET). Topologically, residues 336 to 342 (RTNYPNM) are cytoplasmic. Residues 343 to 366 (FRIGNLVLYILIIIHWNACIYFAI) traverse the membrane as a helical segment. Residues 367–389 (SKVIGFGTDSWVYPNVSIPEYGR) lie on the Extracellular side of the membrane. Helical transmembrane passes span 390–424 (LSRKYIYSLYWSTLTLTTIGETPPPVKDEEYLFVV) and 425–449 (IDFLVGVLIFATIVGNVGSMISNMN). Topologically, residues 450-735 (ASRAEFQAKV…PEKPEEQKKD (286 aa)) are cytoplasmic. 3',5'-cyclic GMP-binding positions include 532 to 654 (LLIE…DNLI), Glu-591, and Arg-606. Residues 715-735 (GSGSLSVGEPEPEKPEEQKKD) are disordered. Basic and acidic residues predominate over residues 725 to 735 (EPEKPEEQKKD).

This sequence belongs to the cyclic nucleotide-gated cation channel (TC 1.A.1.5) family.

The protein resides in the membrane. In terms of biological role, visual signal transduction is mediated by a G-protein coupled cascade using cGMP as second messenger. This protein can be activated by cyclic GMP which leads to an opening of the cation channel and thereby causing a depolarization of cone photoreceptors. In Gallus gallus (Chicken), this protein is Cyclic nucleotide-gated channel cone photoreceptor subunit alpha.